The chain runs to 151 residues: MVVASAASPCESSALFATFDHDGDGRISAAELRLCMKTTLGEEVSDEEAGQLVASVDADGDGLLCEAEFVRLVQAAEVEEEDERRGTGLREAFGMYEMEGEGCITPTSLRRMLRRLGSDQDIDDCRAMICRFDLNGDGVLSFDEFKIMMNA.

4 consecutive EF-hand domains span residues 14-42, 44-79, 84-119, and 120-151; these read ALFA…TLGE, VSDE…AEVE, RRGT…LGSD, and QDID…MMNA. D20, D22, D24, R26, E31, D57, D59, D61, and E68 together coordinate Ca(2+). D133, N135, D137, and E144 together coordinate Ca(2+).

In terms of biological role, potential calcium sensor. This chain is Probable calcium-binding protein CML31 (CML31), found in Oryza sativa subsp. japonica (Rice).